Reading from the N-terminus, the 298-residue chain is Keratin-associated protein 10-11 (298 aa).

25 repeat units span residues 26 to 30 (CCEPP), 36 to 40 (CCAPA), 57 to 61 (CCQAA), 79 to 83 (CCQQS), 89 to 93 (CCTSS), 99 to 103 (CCVPV), 104 to 108 (CCKTV), 109 to 113 (CCKPV), 114 to 118 (CCVPV), 119 to 123 (CCGAA), 126 to 130 (CCRQS), 136 to 140 (CCASS), 146 to 150 (CCVPV), 151 to 155 (CCKPV), 156 to 160 (CCVST), 168 to 172 (CCQQS), 178 to 182 (CCTSS), 188 to 192 (CCVPV), 193 to 197 (CCKTV), 203 to 207 (CCVPV), 225 to 229 (CCTTS), 230 to 234 (CCRPS), 249 to 253 (CCVPV), 256 to 260 (CCAPT), and 267 to 271 (CCRPA). Residues 26 to 271 (CCEPPCSAPS…SCQSSCCRPA (246 aa)) form a 25 X 5 AA repeats of C-C-X(3) region.

It belongs to the KRTAP type 10 family. As to quaternary structure, interacts with hair keratins. In terms of tissue distribution, restricted to a narrow region of the hair fiber cuticle, lying approximately 20 cell layers above the apex of the dermal papilla of the hair root; not detected in any other tissues.

In the hair cortex, hair keratin intermediate filaments are embedded in an interfilamentous matrix, consisting of hair keratin-associated proteins (KRTAP), which are essential for the formation of a rigid and resistant hair shaft through their extensive disulfide bond cross-linking with abundant cysteine residues of hair keratins. The matrix proteins include the high-sulfur and high-glycine-tyrosine keratins. The sequence is that of Keratin-associated protein 10-11 (KRTAP10-11) from Homo sapiens (Human).